A 351-amino-acid polypeptide reads, in one-letter code: Protein TBATA (351 aa).

Disordered stretches follow at residues 16 to 40, 167 to 186, 195 to 216, and 292 to 351; these read KAEL…PQKE, KKEK…KYSA, STRA…SSRH, and EVHE…RAES. Over residues 167-181 the composition is skewed to basic and acidic residues; that stretch reads KKEKEQKEEPLREQG. Composition is skewed to basic and acidic residues over residues 292-302 and 340-351; these read EVHEPPQEKQE and TEKKTSKPRAES.

It belongs to the TBATA family.

Its subcellular location is the cytoplasm. The protein resides in the cytosol. May play a role in spermatid differentiation. Modulates thymic stromal cell proliferation and thymus function. In Homo sapiens (Human), this protein is Protein TBATA (TBATA).